The sequence spans 381 residues: Putative F-box/kelch-repeat protein At3g17570 (381 aa).

The F-box domain maps to 1–45 (MFTDLPRDLETEILSRVPATSLQKLKPTCKRWYTLFKDPEFLKKH). Kelch repeat units lie at residues 151-199 (SYKI…TLKG), 229-281 (LLYQ…KIVE), and 331-379 (RFYI…GGKR).

This Arabidopsis thaliana (Mouse-ear cress) protein is Putative F-box/kelch-repeat protein At3g17570.